Consider the following 277-residue polypeptide: Putative phosphoenolpyruvate synthase regulatory protein (277 aa).

157–164 (GVSRCGKT) contributes to the ADP binding site.

Belongs to the pyruvate, phosphate/water dikinase regulatory protein family. PSRP subfamily.

It carries out the reaction [pyruvate, water dikinase] + ADP = [pyruvate, water dikinase]-phosphate + AMP + H(+). The enzyme catalyses [pyruvate, water dikinase]-phosphate + phosphate + H(+) = [pyruvate, water dikinase] + diphosphate. Its function is as follows. Bifunctional serine/threonine kinase and phosphorylase involved in the regulation of the phosphoenolpyruvate synthase (PEPS) by catalyzing its phosphorylation/dephosphorylation. This chain is Putative phosphoenolpyruvate synthase regulatory protein, found in Erwinia tasmaniensis (strain DSM 17950 / CFBP 7177 / CIP 109463 / NCPPB 4357 / Et1/99).